Here is a 253-residue protein sequence, read N- to C-terminus: Probable transcriptional regulatory protein KRH_13670 (253 aa).

This sequence belongs to the TACO1 family.

It localises to the cytoplasm. The sequence is that of Probable transcriptional regulatory protein KRH_13670 from Kocuria rhizophila (strain ATCC 9341 / DSM 348 / NBRC 103217 / DC2201).